The following is a 100-amino-acid chain: Small ribosomal subunit protein uS14 (100 aa).

The protein belongs to the universal ribosomal protein uS14 family. Part of the 30S ribosomal subunit. Contacts proteins S3 and S10.

Its function is as follows. Binds 16S rRNA, required for the assembly of 30S particles and may also be responsible for determining the conformation of the 16S rRNA at the A site. This Trichodesmium erythraeum (strain IMS101) protein is Small ribosomal subunit protein uS14.